Reading from the N-terminus, the 185-residue chain is MAEPDIKSFERRMDGAVETLRKEFGGLRTGRASTTLLDPVYVDAYGSSSPLNQVATVGVPEPRLITVQVWDRSLVKAVEKAIREAGLGLNPQSDGQTLRVPIPELNQERRQELAKVAAKYAEQARVAVRNVRRDGMDMLKKLLKDGDISEDEQKTWADKVQALTDAHIKKIDEALATKEKEIMQV.

The protein belongs to the RRF family.

It localises to the cytoplasm. In terms of biological role, responsible for the release of ribosomes from messenger RNA at the termination of protein biosynthesis. May increase the efficiency of translation by recycling ribosomes from one round of translation to another. The sequence is that of Ribosome-recycling factor from Rhodospirillum centenum (strain ATCC 51521 / SW).